Consider the following 257-residue polypeptide: Acyl-[acyl-carrier-protein]--UDP-N-acetylglucosamine O-acyltransferase (257 aa).

It belongs to the transferase hexapeptide repeat family. LpxA subfamily. In terms of assembly, homotrimer.

It is found in the cytoplasm. It catalyses the reaction a (3R)-hydroxyacyl-[ACP] + UDP-N-acetyl-alpha-D-glucosamine = a UDP-3-O-[(3R)-3-hydroxyacyl]-N-acetyl-alpha-D-glucosamine + holo-[ACP]. Its pathway is glycolipid biosynthesis; lipid IV(A) biosynthesis; lipid IV(A) from (3R)-3-hydroxytetradecanoyl-[acyl-carrier-protein] and UDP-N-acetyl-alpha-D-glucosamine: step 1/6. In terms of biological role, involved in the biosynthesis of lipid A, a phosphorylated glycolipid that anchors the lipopolysaccharide to the outer membrane of the cell. The sequence is that of Acyl-[acyl-carrier-protein]--UDP-N-acetylglucosamine O-acyltransferase from Anaeromyxobacter sp. (strain K).